Consider the following 229-residue polypeptide: Vitellogenin (229 aa).

In terms of domain architecture, VWFD spans 1–136; it reads IVMLKNDNVE…SWILAAESCR (136 aa). N198 carries an N-linked (GlcNAc...) asparagine glycan.

Expressed in liver, ovary and, to a lesser extent, in muscle, intestine, skin, kidney and heart.

Functionally, precursor of the egg-yolk proteins that are sources of nutrients during early development of oviparous organisms. Its function is as follows. Probably binds tetrodotoxin in the ovary. In Takifugu pardalis (Panther puffer), this protein is Vitellogenin.